Consider the following 492-residue polypeptide: UDP-glucosyl transferase 73DL1 (492 aa).

The Proton acceptor role is filled by His27. Catalysis depends on Asp131, which acts as the Charge relay. Residues Trp352, Val353, His370, Thr375, Glu378, and Tyr392 each contribute to the UDP site.

It belongs to the UDP-glycosyltransferase family. In terms of tissue distribution, mainly expressed in flowers, flower buds and young leaves, and, to a lesser extent, in old leaves, stems and roots.

It functions in the pathway secondary metabolite biosynthesis; terpenoid biosynthesis. In terms of biological role, component of the oleanane-type triterpene saponins (e.g. saponarioside A and saponarioside B) biosynthetic pathway, leading to the production of natural products with detergent properties used as traditional sources of soap. A glycosyltransferase that mediates the conversion of QA-mono to QA-di via the elongation of the C-3 sugar chain with a D-galactose. This Saponaria officinalis (Common soapwort) protein is UDP-glucosyl transferase 73DL1.